The sequence spans 533 residues: Dipeptidase (533 aa).

Cys-3 is an active-site residue.

Belongs to the peptidase C69 family.

It catalyses the reaction an L-aminoacyl-L-amino acid + H2O = 2 an L-alpha-amino acid. Its function is as follows. Hydrolyzes a wide range of dipeptides. Highest activity against Ala-Gln. In Bifidobacterium longum (strain NCC 2705), this protein is Dipeptidase.